Here is a 357-residue protein sequence, read N- to C-terminus: MSDKTPRKPTAFRLEQPARVSAASEQEEPRRPRAVKDLEQITPQADVFDLTDDEAAELEILDPAFEAPERKGWSLSRILFGALGILVSFAIGIWTEDLIRALFARADWLGWTALGVAMVALAAFAAIILRELVALRRLASVQHLRKDAADAAERDDMAAARKAVDALRSIAAGIPETAKGRQLLDSLTDDIIDGRDLIRLAETEILRPLDREARTLVLNASKRVSIVTAISPRALVDIGYVIFESARLIRRLSQLYGGRPGTLGFIKFARRVIAHLAVTGTIAMGDSVMQQLVGHGLASRLSAKLGEGVVNGLMTARIGIAAMDVVRPFPFNAEKRPGIGDFIGDLARLNSDRNARK.

Residues 1–36 form a disordered region; it reads MSDKTPRKPTAFRLEQPARVSAASEQEEPRRPRAVK. Over residues 27–36 the composition is skewed to basic and acidic residues; that stretch reads EEPRRPRAVK. A run of 2 helical transmembrane segments spans residues 78 to 98 and 109 to 129; these read ILFGALGILVSFAIGIWTEDL and LGWTALGVAMVALAAFAAIIL.

The protein belongs to the UPF0283 family.

The protein resides in the cell inner membrane. The polypeptide is UPF0283 membrane protein BMEI0952 (Brucella melitensis biotype 1 (strain ATCC 23456 / CCUG 17765 / NCTC 10094 / 16M)).